A 323-amino-acid chain; its full sequence is tRNA uridine(34) hydroxylase (323 aa).

The 95-residue stretch at 127-221 (QDENTVVLDA…YGQDPEVQGD (95 aa)) folds into the Rhodanese domain. Catalysis depends on Cys181, which acts as the Cysteine persulfide intermediate.

The protein belongs to the TrhO family.

It carries out the reaction uridine(34) in tRNA + AH2 + O2 = 5-hydroxyuridine(34) in tRNA + A + H2O. Functionally, catalyzes oxygen-dependent 5-hydroxyuridine (ho5U) modification at position 34 in tRNAs. This chain is tRNA uridine(34) hydroxylase, found in Oceanobacillus iheyensis (strain DSM 14371 / CIP 107618 / JCM 11309 / KCTC 3954 / HTE831).